The sequence spans 386 residues: Protein salvador homolog 1 (386 aa).

A phosphoserine mark is found at serine 95 and serine 137. WW domains follow at residues leucine 200–glutamate 233 and glutamate 235–alanine 268. Threonine 211 is subject to Phosphothreonine. Residues isoleucine 322–arginine 369 enclose the SARAH domain. Positions methionine 345 to glutamine 374 form a coiled coil.

As to quaternary structure, homodimer. Stabilized through interaction with STK3/MST2 or STK4/MST1. Interacts (via SARAH domain) with isoform 1 of NEK2. Interacts with ESR1 only in the presence of STK3/MST2. Interacts with WTIP and AJUBA. Post-translationally, phosphorylated by STK3/MST2 and STK4/MST1. Phosphorylation is not required for SAV1 stability and may increase the number of protein binding sites on the scaffold molecule. In terms of tissue distribution, ubiquitously expressed in adult tissues with the highest level found in testis.

The protein resides in the nucleus. Its subcellular location is the cytoplasm. Regulator of STK3/MST2 and STK4/MST1 in the Hippo signaling pathway which plays a pivotal role in organ size control and tumor suppression by restricting proliferation and promoting apoptosis. The core of this pathway is composed of a kinase cascade wherein STK3/MST2 and STK4/MST1, in complex with its regulatory protein SAV1, phosphorylates and activates LATS1/2 in complex with its regulatory protein MOB1, which in turn phosphorylates and inactivates YAP1 oncoprotein and WWTR1/TAZ. Phosphorylation of YAP1 by LATS1/2 inhibits its translocation into the nucleus to regulate cellular genes important for cell proliferation, cell death, and cell migration. SAV1 is required for STK3/MST2 and STK4/MST1 activation and promotes cell-cycle exit and terminal differentiation in developing epithelial tissues. Plays a role in centrosome disjunction by regulating the localization of NEK2 to centrosomes, and its ability to phosphorylate CROCC and CEP250. In conjunction with STK3/MST2, activates the transcriptional activity of ESR1 through the modulation of its phosphorylation. The chain is Protein salvador homolog 1 (Sav1) from Mus musculus (Mouse).